A 440-amino-acid polypeptide reads, in one-letter code: L-gulonolactone oxidase (440 aa).

Residues Tyr-17–Gln-187 form the FAD-binding PCMH-type domain. His-54 carries the pros-8alpha-FAD histidine modification. A helical membrane pass occupies residues Phe-253–Ile-273.

It belongs to the oxygen-dependent FAD-linked oxidoreductase family. Requires FAD as cofactor.

The protein localises to the microsome membrane. The protein resides in the endoplasmic reticulum membrane. The catalysed reaction is L-gulono-1,4-lactone + O2 = L-ascorbate + H2O2 + H(+). The protein operates within cofactor biosynthesis; L-ascorbate biosynthesis via UDP-alpha-D-glucuronate pathway; L-ascorbate from UDP-alpha-D-glucuronate: step 4/4. Oxidizes L-gulono-1,4-lactone to hydrogen peroxide and L-xylo-hexulonolactone which spontaneously isomerizes to L-ascorbate. The protein is L-gulonolactone oxidase (GULO) of Bos taurus (Bovine).